Here is a 465-residue protein sequence, read N- to C-terminus: Argininosuccinate lyase (465 aa).

It belongs to the lyase 1 family. Argininosuccinate lyase subfamily.

It is found in the cytoplasm. It catalyses the reaction 2-(N(omega)-L-arginino)succinate = fumarate + L-arginine. It functions in the pathway amino-acid biosynthesis; L-arginine biosynthesis; L-arginine from L-ornithine and carbamoyl phosphate: step 3/3. The protein is Argininosuccinate lyase of Halorhodospira halophila (strain DSM 244 / SL1) (Ectothiorhodospira halophila (strain DSM 244 / SL1)).